An 81-amino-acid chain; its full sequence is Dermaseptin-S6 (81 aa).

The first 22 residues, 1–22 (MDILKKSLFFILFLGLVSLSIS), serve as a signal peptide directing secretion. The disordered stretch occupies residues 22-49 (SEEEKRENEDEEDQEDDEQSEEKRGLWS). Positions 23-45 (EEEKRENEDEEDQEDDEQSEEKR) are excised as a propeptide. Residues 30–41 (EDEEDQEDDEQS) are compositionally biased toward acidic residues. At isoleucine 78 the chain carries Isoleucine amide. A propeptide spanning residues 80–81 (EQ) is cleaved from the precursor.

The protein belongs to the frog skin active peptide (FSAP) family. Dermaseptin subfamily. In terms of tissue distribution, expressed by the skin glands.

Its subcellular location is the secreted. Antimicrobial peptide. This chain is Dermaseptin-S6, found in Phyllomedusa sauvagei (Sauvage's leaf frog).